The chain runs to 65 residues: YYEAPPDGRHLLLQPAPAAPAVAPAAPASWPHQQRRQALDEFAAAAAAAADAQFQDEEEDGGRRV.

Positions 17 to 28 (PAAPAVAPAAPA) are enriched in low complexity. The segment at 17–36 (PAAPAVAPAAPASWPHQQRR) is disordered.

As to quaternary structure, monomer.

Neurohormone that anticipates ovarian maturation. Acts as a true gonadotropin and stimulates vitellogenin biosynthesis. This is Ovary maturating parsin from Locusta migratoria (Migratory locust).